A 708-amino-acid polypeptide reads, in one-letter code: Polyribonucleotide nucleotidyltransferase (708 aa).

The Mg(2+) site is built by Asp488 and Asp494. A KH domain is found at Pro555–Ile615. In terms of domain architecture, S1 motif spans Gly625–Val692.

Belongs to the polyribonucleotide nucleotidyltransferase family. The cofactor is Mg(2+).

The protein resides in the cytoplasm. The enzyme catalyses RNA(n+1) + phosphate = RNA(n) + a ribonucleoside 5'-diphosphate. In terms of biological role, involved in mRNA degradation. Catalyzes the phosphorolysis of single-stranded polyribonucleotides processively in the 3'- to 5'-direction. The sequence is that of Polyribonucleotide nucleotidyltransferase from Thermotoga sp. (strain RQ2).